Consider the following 227-residue polypeptide: PKHD-type hydroxylase BTH_II1201 (227 aa).

Positions 78–178 (KVFPPLFNRY…RVASFFWIQS (101 aa)) constitute a Fe2OG dioxygenase domain. Residues histidine 96, aspartate 98, and histidine 159 each contribute to the Fe cation site. Arginine 169 is a 2-oxoglutarate binding site.

Requires Fe(2+) as cofactor. The cofactor is L-ascorbate.

The sequence is that of PKHD-type hydroxylase BTH_II1201 from Burkholderia thailandensis (strain ATCC 700388 / DSM 13276 / CCUG 48851 / CIP 106301 / E264).